The following is a 156-amino-acid chain: Ribosomal RNA large subunit methyltransferase H (156 aa).

S-adenosyl-L-methionine-binding positions include Leu-73, Gly-104, and 123–128 (LSALTL).

Belongs to the RNA methyltransferase RlmH family. As to quaternary structure, homodimer.

The protein localises to the cytoplasm. It catalyses the reaction pseudouridine(1915) in 23S rRNA + S-adenosyl-L-methionine = N(3)-methylpseudouridine(1915) in 23S rRNA + S-adenosyl-L-homocysteine + H(+). Functionally, specifically methylates the pseudouridine at position 1915 (m3Psi1915) in 23S rRNA. In Shewanella oneidensis (strain ATCC 700550 / JCM 31522 / CIP 106686 / LMG 19005 / NCIMB 14063 / MR-1), this protein is Ribosomal RNA large subunit methyltransferase H.